Here is a 386-residue protein sequence, read N- to C-terminus: Succinate--CoA ligase [ADP-forming] subunit beta (386 aa).

The ATP-grasp domain occupies 9–244 (KDLLTSYQLP…PSQENIRDVL (236 aa)). Residues Lys-46, 53 to 55 (GRG), Val-102, and Glu-107 each bind ATP. Asn-199 and Asp-213 together coordinate Mg(2+). Residues Asn-264 and 321-323 (GIM) contribute to the substrate site.

It belongs to the succinate/malate CoA ligase beta subunit family. In terms of assembly, heterotetramer of two alpha and two beta subunits. The cofactor is Mg(2+).

It catalyses the reaction succinate + ATP + CoA = succinyl-CoA + ADP + phosphate. It carries out the reaction GTP + succinate + CoA = succinyl-CoA + GDP + phosphate. It participates in carbohydrate metabolism; tricarboxylic acid cycle; succinate from succinyl-CoA (ligase route): step 1/1. Its function is as follows. Succinyl-CoA synthetase functions in the citric acid cycle (TCA), coupling the hydrolysis of succinyl-CoA to the synthesis of either ATP or GTP and thus represents the only step of substrate-level phosphorylation in the TCA. The beta subunit provides nucleotide specificity of the enzyme and binds the substrate succinate, while the binding sites for coenzyme A and phosphate are found in the alpha subunit. The chain is Succinate--CoA ligase [ADP-forming] subunit beta from Chlamydia muridarum (strain MoPn / Nigg).